Here is a 77-residue protein sequence, read N- to C-terminus: Small ribosomal subunit protein bS20 (77 aa).

The protein belongs to the bacterial ribosomal protein bS20 family.

In terms of biological role, binds directly to 16S ribosomal RNA. The protein is Small ribosomal subunit protein bS20 of Lactococcus lactis subsp. lactis (strain IL1403) (Streptococcus lactis).